The sequence spans 416 residues: Tyrosine--tRNA ligase (416 aa).

An L-tyrosine-binding site is contributed by Tyr-41. Residues 46 to 55 carry the 'HIGH' region motif; sequence ATASSLHAGH. L-tyrosine contacts are provided by Tyr-175 and Gln-179. A 'KMSKS' region motif is present at residues 235-239; sequence KMGKT. Residue Lys-238 participates in ATP binding. The S4 RNA-binding domain maps to 349–416; it reads LPVAKAFVDA…KKKHVLLKPV (68 aa).

The protein belongs to the class-I aminoacyl-tRNA synthetase family. TyrS type 1 subfamily. In terms of assembly, homodimer.

The protein resides in the cytoplasm. The catalysed reaction is tRNA(Tyr) + L-tyrosine + ATP = L-tyrosyl-tRNA(Tyr) + AMP + diphosphate + H(+). Functionally, catalyzes the attachment of tyrosine to tRNA(Tyr) in a two-step reaction: tyrosine is first activated by ATP to form Tyr-AMP and then transferred to the acceptor end of tRNA(Tyr). The polypeptide is Tyrosine--tRNA ligase (Xanthobacter autotrophicus (strain ATCC BAA-1158 / Py2)).